Consider the following 413-residue polypeptide: Aspartate aminotransferase, cytoplasmic (413 aa).

L-aspartate contacts are provided by glycine 39 and tryptophan 141. Position 149 is a phosphoserine (serine 149). An L-aspartate-binding site is contributed by asparagine 195. Position 259 is an N6-(pyridoxal phosphate)lysine (lysine 259). Arginine 387 lines the L-aspartate pocket.

Belongs to the class-I pyridoxal-phosphate-dependent aminotransferase family. Homodimer. Pyridoxal 5'-phosphate serves as cofactor.

The protein resides in the cytoplasm. It carries out the reaction L-aspartate + 2-oxoglutarate = oxaloacetate + L-glutamate. The enzyme catalyses L-cysteine + 2-oxoglutarate = 2-oxo-3-sulfanylpropanoate + L-glutamate. The catalysed reaction is (2S)-2-aminobutanoate + 2-oxoglutarate = 2-oxobutanoate + L-glutamate. It catalyses the reaction 3-sulfino-L-alanine + 2-oxoglutarate = 3-sulfinopyruvate + L-glutamate. Its function is as follows. Biosynthesis of L-glutamate from L-aspartate or L-cysteine. Important regulator of levels of glutamate, the major excitatory neurotransmitter of the vertebrate central nervous system. Acts as a scavenger of glutamate in brain neuroprotection. The aspartate aminotransferase activity is involved in hepatic glucose synthesis during development and in adipocyte glyceroneogenesis. Using L-cysteine as substrate, regulates levels of mercaptopyruvate, an important source of hydrogen sulfide. Mercaptopyruvate is converted into H(2)S via the action of 3-mercaptopyruvate sulfurtransferase (3MST). Hydrogen sulfide is an important synaptic modulator and neuroprotectant in the brain. This Pan troglodytes (Chimpanzee) protein is Aspartate aminotransferase, cytoplasmic.